Consider the following 394-residue polypeptide: Chorismate synthase (394 aa).

2 residues coordinate NADP(+): R40 and R46. Residues 135-137, 255-256, G302, 317-321, and R343 contribute to the FMN site; these read RAS, QA, and KPISS.

The protein belongs to the chorismate synthase family. In terms of assembly, homotetramer. Requires FMNH2 as cofactor.

The enzyme catalyses 5-O-(1-carboxyvinyl)-3-phosphoshikimate = chorismate + phosphate. It functions in the pathway metabolic intermediate biosynthesis; chorismate biosynthesis; chorismate from D-erythrose 4-phosphate and phosphoenolpyruvate: step 7/7. In terms of biological role, catalyzes the anti-1,4-elimination of the C-3 phosphate and the C-6 proR hydrogen from 5-enolpyruvylshikimate-3-phosphate (EPSP) to yield chorismate, which is the branch point compound that serves as the starting substrate for the three terminal pathways of aromatic amino acid biosynthesis. This reaction introduces a second double bond into the aromatic ring system. This Parafrankia sp. (strain EAN1pec) protein is Chorismate synthase.